The chain runs to 217 residues: Cytidylate kinase (217 aa).

Position 11 to 19 (11 to 19 (GPAGAGKST)) interacts with ATP.

This sequence belongs to the cytidylate kinase family. Type 1 subfamily.

The protein resides in the cytoplasm. The enzyme catalyses CMP + ATP = CDP + ADP. The catalysed reaction is dCMP + ATP = dCDP + ADP. This is Cytidylate kinase from Clostridium perfringens (strain ATCC 13124 / DSM 756 / JCM 1290 / NCIMB 6125 / NCTC 8237 / Type A).